Here is a 583-residue protein sequence, read N- to C-terminus: Torsin-1A-interacting protein 1 (583 aa).

Residues 1 to 339 (MAGERWRAEG…DESSVKIKWW (339 aa)) are Nuclear-facing. Residues 23 to 208 (APIREGRRRL…PPLRSPRPDA (186 aa)) are disordered. Ser-60 carries the post-translational modification Phosphoserine. Composition is skewed to basic and acidic residues over residues 70–101 (FEPR…EVRE) and 115–132 (GPQE…RLEQ). A phosphoserine mark is found at Ser-134, Ser-142, Ser-155, and Ser-157. The span at 166–188 (SSQPVTSQTVSKKTVRTPETSVM) shows a compositional bias: polar residues. Ser-189 is subject to Phosphoserine. Thr-222 carries the post-translational modification Phosphothreonine. A phosphoserine mark is found at Ser-228, Ser-231, and Ser-242. Residue Lys-309 forms a Glycyl lysine isopeptide (Lys-Gly) (interchain with G-Cter in SUMO2) linkage. Phosphoserine is present on Ser-316. A helical transmembrane segment spans residues 340-360 (LLILVAALAMGIYWFFHTPVV). Residues 356 to 583 (HTPVVETTAV…ENALKAGSCL (228 aa)) form an interaction with TOR1A region. The stretch at 360 to 388 (VETTAVQEFQNQMKQLQSKYQSQDEKLWK) forms a coiled coil. Topologically, residues 361 to 583 (ETTAVQEFQN…ENALKAGSCL (223 aa)) are perinuclear space. N-linked (GlcNAc...) asparagine glycosylation is present at Asn-399.

The protein belongs to the TOR1AIP family. In terms of assembly, interacts with ATP1B4. Interacts with TOR1A (ATP-bound). Interacts with TOR1B, TOR2A and TOR3A. Interacts with VIM.

It is found in the nucleus inner membrane. Its function is as follows. Required for nuclear membrane integrity. Induces TOR1A and TOR1B ATPase activity and is required for their location on the nuclear membrane. Binds to A- and B-type lamins. Possible role in membrane attachment and assembly of the nuclear lamina. This chain is Torsin-1A-interacting protein 1 (Tor1aip1), found in Rattus norvegicus (Rat).